Here is a 70-residue protein sequence, read N- to C-terminus: Probable rubredoxin HupI (70 aa).

The region spanning 15–66 (DDRMECGICWHVYDPAEGDPVWQIPPGTPFSNLTEDWRCPNCDALQSKFMRL) is the Rubredoxin-like domain. 4 residues coordinate Fe cation: C20, C23, C53, and C56.

This sequence belongs to the rubredoxin family. It depends on Fe(3+) as a cofactor.

In terms of biological role, could be an electron transport intermediate in hydrogen oxidation. The sequence is that of Probable rubredoxin HupI (hupI) from Rhizobium leguminosarum bv. viciae.